The sequence spans 267 residues: Acyl-[acyl-carrier-protein]--UDP-N-acetylglucosamine O-acyltransferase (267 aa).

It belongs to the transferase hexapeptide repeat family. LpxA subfamily. Homotrimer.

It localises to the cytoplasm. It carries out the reaction a (3R)-hydroxyacyl-[ACP] + UDP-N-acetyl-alpha-D-glucosamine = a UDP-3-O-[(3R)-3-hydroxyacyl]-N-acetyl-alpha-D-glucosamine + holo-[ACP]. It functions in the pathway glycolipid biosynthesis; lipid IV(A) biosynthesis; lipid IV(A) from (3R)-3-hydroxytetradecanoyl-[acyl-carrier-protein] and UDP-N-acetyl-alpha-D-glucosamine: step 1/6. Its function is as follows. Involved in the biosynthesis of lipid A, a phosphorylated glycolipid that anchors the lipopolysaccharide to the outer membrane of the cell. The chain is Acyl-[acyl-carrier-protein]--UDP-N-acetylglucosamine O-acyltransferase from Cupriavidus taiwanensis (strain DSM 17343 / BCRC 17206 / CCUG 44338 / CIP 107171 / LMG 19424 / R1) (Ralstonia taiwanensis (strain LMG 19424)).